The following is a 470-amino-acid chain: Pheromone a factor receptor (470 aa).

Residues 1 to 5 (MSYKS) lie on the Extracellular side of the membrane. Residues 6-23 (AIIGLCLLAVILLAPPLA) form a helical membrane-spanning segment. The Cytoplasmic segment spans residues 24–29 (WHSHTK). A helical transmembrane segment spans residues 30–53 (NIPAIILITWLLTMNLTCIVDAAI). The Extracellular portion of the chain corresponds to 54-70 (WSDDDFLTRWDGKGWCD). A helical membrane pass occupies residues 71–98 (IVIKLQVGANIGISCAVTNIIYNLHTIL). The Cytoplasmic portion of the chain corresponds to 99-116 (KADSVLPDLSSWTKIVKD). Residues 117-134 (LVISLFTPVMVMGFSYLL) traverse the membrane as a helical segment. Residues 135 to 155 (QVFRYGIARYNGCQNLLSPTW) are Extracellular-facing. Residues 156–183 (ITTVLYTMWMLIWSFVGAVYATLVLFVF) form a helical membrane-spanning segment. At 184 to 205 (YKKRKDVRDILHCTNSGLNLTR) the chain is on the cytoplasmic side. A helical membrane pass occupies residues 206–228 (FARLLIFCFIIILVMFPFSVYTF). At 229-266 (VQDLQQVEGHYTFKNTHSSTIWNTIIKFDPGRPIYNIW) the chain is on the extracellular side. The chain crosses the membrane as a helical span at residues 267 to 285 (LYVLMSYLVFLIFGLGSDA). Residues 286–470 (LHMYSKFLRS…EHSSENTAGP (185 aa)) lie on the Cytoplasmic side of the membrane. The hydrophilic stretch occupies residues 300-470 (FVLDMWKRFI…EHSSENTAGP (171 aa)). Residues 440-470 (NFEGESLCYSPASKEENSSSNEHSSENTAGP) form a disordered region.

The protein belongs to the G-protein coupled receptor 4 family.

Its subcellular location is the membrane. In terms of biological role, receptor for the peptide pheromone a factor. In Saccharomyces cerevisiae (strain ATCC 204508 / S288c) (Baker's yeast), this protein is Pheromone a factor receptor (STE3).